Consider the following 369-residue polypeptide: Cell division protein FtsZ (369 aa).

Residues 27–31 (GAGNN), 119–121 (GTG), Glu-150, and Asn-189 each bind GTP.

Belongs to the FtsZ family. As to quaternary structure, homodimer. Polymerizes to form a dynamic ring structure in a strictly GTP-dependent manner. Interacts directly with several other division proteins.

It is found in the cytoplasm. Functionally, essential cell division protein that forms a contractile ring structure (Z ring) at the future cell division site. The regulation of the ring assembly controls the timing and the location of cell division. One of the functions of the FtsZ ring is to recruit other cell division proteins to the septum to produce a new cell wall between the dividing cells. Binds GTP and shows GTPase activity. This is Cell division protein FtsZ from Mycoplasma genitalium (strain ATCC 33530 / DSM 19775 / NCTC 10195 / G37) (Mycoplasmoides genitalium).